Consider the following 451-residue polypeptide: Bifunctional protein GlmU (451 aa).

Residues 1–225 (MVVVAILAAG…YQEILGINDR (225 aa)) are pyrophosphorylase. Residues 7 to 10 (LAAG), K21, Q72, and 77 to 78 (GT) contribute to the UDP-N-acetyl-alpha-D-glucosamine site. Mg(2+) is bound at residue D102. UDP-N-acetyl-alpha-D-glucosamine contacts are provided by G139, E154, N169, and N223. N223 contacts Mg(2+). The linker stretch occupies residues 226–246 (LQLATAYEILQRRVKEQWMMA). Residues 247–451 (GVTLIDPNSI…LGWRRKSGES (205 aa)) are N-acetyltransferase. Residues R328 and K346 each contribute to the UDP-N-acetyl-alpha-D-glucosamine site. H358 functions as the Proton acceptor in the catalytic mechanism. UDP-N-acetyl-alpha-D-glucosamine contacts are provided by Y361 and N372. Residues A375, 381–382 (NY), S400, A418, and R435 contribute to the acetyl-CoA site.

The protein in the N-terminal section; belongs to the N-acetylglucosamine-1-phosphate uridyltransferase family. This sequence in the C-terminal section; belongs to the transferase hexapeptide repeat family. In terms of assembly, homotrimer. Requires Mg(2+) as cofactor.

The protein resides in the cytoplasm. It carries out the reaction alpha-D-glucosamine 1-phosphate + acetyl-CoA = N-acetyl-alpha-D-glucosamine 1-phosphate + CoA + H(+). The enzyme catalyses N-acetyl-alpha-D-glucosamine 1-phosphate + UTP + H(+) = UDP-N-acetyl-alpha-D-glucosamine + diphosphate. It participates in nucleotide-sugar biosynthesis; UDP-N-acetyl-alpha-D-glucosamine biosynthesis; N-acetyl-alpha-D-glucosamine 1-phosphate from alpha-D-glucosamine 6-phosphate (route II): step 2/2. Its pathway is nucleotide-sugar biosynthesis; UDP-N-acetyl-alpha-D-glucosamine biosynthesis; UDP-N-acetyl-alpha-D-glucosamine from N-acetyl-alpha-D-glucosamine 1-phosphate: step 1/1. It functions in the pathway bacterial outer membrane biogenesis; LPS lipid A biosynthesis. In terms of biological role, catalyzes the last two sequential reactions in the de novo biosynthetic pathway for UDP-N-acetylglucosamine (UDP-GlcNAc). The C-terminal domain catalyzes the transfer of acetyl group from acetyl coenzyme A to glucosamine-1-phosphate (GlcN-1-P) to produce N-acetylglucosamine-1-phosphate (GlcNAc-1-P), which is converted into UDP-GlcNAc by the transfer of uridine 5-monophosphate (from uridine 5-triphosphate), a reaction catalyzed by the N-terminal domain. This chain is Bifunctional protein GlmU, found in Nostoc sp. (strain PCC 7120 / SAG 25.82 / UTEX 2576).